The following is a 277-amino-acid chain: E3 ubiquitin-protein ligase CCNB1IP1 (277 aa).

Residues Cys-4 to Cys-51 form an RING-type; atypical zinc finger. Residues Gln-127–Arg-182 adopt a coiled-coil conformation.

In terms of assembly, interacts with CCNB1, UBE2L3 and NF2. Ubiquitinated; autoubiquitinated. Post-translationally, phosphorylated by CDK1 on serine or threonine residues (in vitro). In terms of tissue distribution, highly expressed in heart. Detected at intermediate levels in liver and kidney, and at low levels in placenta, brain and lung.

The protein localises to the nucleus. Its subcellular location is the chromosome. The enzyme catalyses S-ubiquitinyl-[E2 ubiquitin-conjugating enzyme]-L-cysteine + [acceptor protein]-L-lysine = [E2 ubiquitin-conjugating enzyme]-L-cysteine + N(6)-ubiquitinyl-[acceptor protein]-L-lysine.. It participates in protein modification; protein ubiquitination. Ubiquitin E3 ligase that acts as a limiting factor for crossing-over during meiosis: required during zygonema to limit the colocalization of RNF212 with MutS-gamma-associated recombination sites and thereby establish early differentiation of crossover and non-crossover sites. Later, it is directed by MutL-gamma to stably accumulate at designated crossover sites. Probably promotes the dissociation of RNF212 and MutS-gamma to allow the progression of recombination and the implementation of the final steps of crossing over. Modulates cyclin-B levels and participates in the regulation of cell cycle progression through the G2 phase. Overexpression causes delayed entry into mitosis. In Homo sapiens (Human), this protein is E3 ubiquitin-protein ligase CCNB1IP1 (CCNB1IP1).